A 697-amino-acid polypeptide reads, in one-letter code: Tryptophan synthase (697 aa).

Residues 1–298 (MTEQIKKTFL…AVVEPINEMY (298 aa)) form a tryptophan synthase alpha chain region. Catalysis depends on proton acceptor residues E50 and D61. The tract at residues 298 to 697 (YLPQKYGMFG…GPKIGWDLRF (400 aa)) is tryptophan synthase beta chain. K381 carries the N6-(pyridoxal phosphate)lysine modification.

It in the N-terminal section; belongs to the TrpA family. This sequence in the C-terminal section; belongs to the TrpB family. Requires pyridoxal 5'-phosphate as cofactor.

The enzyme catalyses (1S,2R)-1-C-(indol-3-yl)glycerol 3-phosphate + L-serine = D-glyceraldehyde 3-phosphate + L-tryptophan + H2O. The protein operates within amino-acid biosynthesis; L-tryptophan biosynthesis; L-tryptophan from chorismate: step 5/5. This Schizosaccharomyces pombe (strain 972 / ATCC 24843) (Fission yeast) protein is Tryptophan synthase (trp2).